Consider the following 1303-residue polypeptide: DNA-directed RNA polymerase subunit beta (1303 aa).

It belongs to the RNA polymerase beta chain family. The RNAP catalytic core consists of 2 alpha, 1 beta, 1 beta' and 1 omega subunit. When a sigma factor is associated with the core the holoenzyme is formed, which can initiate transcription.

The enzyme catalyses RNA(n) + a ribonucleoside 5'-triphosphate = RNA(n+1) + diphosphate. Functionally, DNA-dependent RNA polymerase catalyzes the transcription of DNA into RNA using the four ribonucleoside triphosphates as substrates. This chain is DNA-directed RNA polymerase subunit beta, found in Chlorobaculum tepidum (strain ATCC 49652 / DSM 12025 / NBRC 103806 / TLS) (Chlorobium tepidum).